Here is a 279-residue protein sequence, read N- to C-terminus: 4-hydroxy-3-methylbut-2-enyl diphosphate reductase (279 aa).

Residue C12 participates in [4Fe-4S] cluster binding. Residues H41 and H74 each contribute to the (2E)-4-hydroxy-3-methylbut-2-enyl diphosphate site. H41 and H74 together coordinate dimethylallyl diphosphate. Isopentenyl diphosphate-binding residues include H41 and H74. A [4Fe-4S] cluster-binding site is contributed by C96. H124 contacts (2E)-4-hydroxy-3-methylbut-2-enyl diphosphate. H124 contacts dimethylallyl diphosphate. H124 provides a ligand contact to isopentenyl diphosphate. E126 functions as the Proton donor in the catalytic mechanism. (2E)-4-hydroxy-3-methylbut-2-enyl diphosphate is bound at residue T164. C192 provides a ligand contact to [4Fe-4S] cluster. Residues S220, S221, N222, and S263 each coordinate (2E)-4-hydroxy-3-methylbut-2-enyl diphosphate. Positions 220, 221, 222, and 263 each coordinate dimethylallyl diphosphate. Residues S220, S221, N222, and S263 each coordinate isopentenyl diphosphate.

It belongs to the IspH family. It depends on [4Fe-4S] cluster as a cofactor.

The enzyme catalyses isopentenyl diphosphate + 2 oxidized [2Fe-2S]-[ferredoxin] + H2O = (2E)-4-hydroxy-3-methylbut-2-enyl diphosphate + 2 reduced [2Fe-2S]-[ferredoxin] + 2 H(+). It catalyses the reaction dimethylallyl diphosphate + 2 oxidized [2Fe-2S]-[ferredoxin] + H2O = (2E)-4-hydroxy-3-methylbut-2-enyl diphosphate + 2 reduced [2Fe-2S]-[ferredoxin] + 2 H(+). It functions in the pathway isoprenoid biosynthesis; dimethylallyl diphosphate biosynthesis; dimethylallyl diphosphate from (2E)-4-hydroxy-3-methylbutenyl diphosphate: step 1/1. The protein operates within isoprenoid biosynthesis; isopentenyl diphosphate biosynthesis via DXP pathway; isopentenyl diphosphate from 1-deoxy-D-xylulose 5-phosphate: step 6/6. Catalyzes the conversion of 1-hydroxy-2-methyl-2-(E)-butenyl 4-diphosphate (HMBPP) into a mixture of isopentenyl diphosphate (IPP) and dimethylallyl diphosphate (DMAPP). Acts in the terminal step of the DOXP/MEP pathway for isoprenoid precursor biosynthesis. The protein is 4-hydroxy-3-methylbut-2-enyl diphosphate reductase of Clostridioides difficile (strain 630) (Peptoclostridium difficile).